The chain runs to 106 residues: UPF0145 protein APJL_0492 (106 aa).

It belongs to the UPF0145 family.

This chain is UPF0145 protein APJL_0492, found in Actinobacillus pleuropneumoniae serotype 3 (strain JL03).